Consider the following 162-residue polypeptide: Transcription elongation factor GreA (162 aa).

Residues 44–69 (SENAEYEAAREKQAFVEARIKHLEDI) adopt a coiled-coil conformation.

Belongs to the GreA/GreB family.

Necessary for efficient RNA polymerase transcription elongation past template-encoded arresting sites. The arresting sites in DNA have the property of trapping a certain fraction of elongating RNA polymerases that pass through, resulting in locked ternary complexes. Cleavage of the nascent transcript by cleavage factors such as GreA or GreB allows the resumption of elongation from the new 3'terminus. GreA releases sequences of 2 to 3 nucleotides. The protein is Transcription elongation factor GreA of Rickettsia bellii (strain RML369-C).